Consider the following 147-residue polypeptide: Cyanate hydratase (147 aa).

Catalysis depends on residues arginine 88, glutamate 91, and serine 114.

This sequence belongs to the cyanase family.

It carries out the reaction cyanate + hydrogencarbonate + 3 H(+) = NH4(+) + 2 CO2. Its function is as follows. Catalyzes the reaction of cyanate with bicarbonate to produce ammonia and carbon dioxide. This is Cyanate hydratase from Albidiferax ferrireducens (strain ATCC BAA-621 / DSM 15236 / T118) (Rhodoferax ferrireducens).